The primary structure comprises 265 residues: NAD kinase 1 (265 aa).

Asp45 serves as the catalytic Proton acceptor. NAD(+)-binding positions include 45–46 (DG), His50, 122–123 (NE), Arg148, Asp150, and Ala185.

This sequence belongs to the NAD kinase family. It depends on a divalent metal cation as a cofactor.

It is found in the cytoplasm. It catalyses the reaction NAD(+) + ATP = ADP + NADP(+) + H(+). Functionally, involved in the regulation of the intracellular balance of NAD and NADP, and is a key enzyme in the biosynthesis of NADP. Catalyzes specifically the phosphorylation on 2'-hydroxyl of the adenosine moiety of NAD to yield NADP. This Halalkalibacterium halodurans (strain ATCC BAA-125 / DSM 18197 / FERM 7344 / JCM 9153 / C-125) (Bacillus halodurans) protein is NAD kinase 1.